The chain runs to 108 residues: Mitochondrial pyruvate carrier 4 (108 aa).

A run of 3 helical transmembrane segments spans residues 19-35, 51-67, and 74-90; these read IHFWAPTFKWGISIANI, IAVTCTGVIWSRYSMVI, and LFSVNVAMAGTGIYQLA.

Belongs to the mitochondrial pyruvate carrier (MPC) (TC 2.A.105) family.

It is found in the mitochondrion inner membrane. In terms of biological role, mediates the uptake of pyruvate into mitochondria. The sequence is that of Mitochondrial pyruvate carrier 4 from Arabidopsis thaliana (Mouse-ear cress).